Consider the following 69-residue polypeptide: Mitotic-spindle organizing protein 1 (69 aa).

Belongs to the MOZART1 family. Part of the gamma-tubulin complex.

Its subcellular location is the cytoplasm. It is found in the cytoskeleton. It localises to the microtubule organizing center. The protein localises to the spindle. In terms of biological role, required for gamma-tubulin complex recruitment to the microtubule organizing centers (MTOCs). The chain is Mitotic-spindle organizing protein 1 from Picea sitchensis (Sitka spruce).